Consider the following 232-residue polypeptide: MNIAIIGAMEEEVAILREKIANRTETTVANCSFYSGTLDGANVVLLKSGIGKVNAAMSTTILLERFAPDVVINTGSAGGFAPSLNVGDIVISTEVVHHDVDVTAFGYAYGQVPGMPARYAADERLIQAAETSAAHIRDIQVAKGLIATGDSFMHDPARVDFVRTQFPDLYAVEMEAAAIAQVCHQFNVPFVVIRALSDIAGKESNVSFEQFLQKAALHSSELVQLMVNELNK.

Glutamate 12 functions as the Proton acceptor in the catalytic mechanism. Substrate contacts are provided by residues glycine 78, methionine 153, and 174–175; that span reads ME. The Proton donor role is filled by aspartate 198.

The protein belongs to the PNP/UDP phosphorylase family. MtnN subfamily.

It carries out the reaction S-adenosyl-L-homocysteine + H2O = S-(5-deoxy-D-ribos-5-yl)-L-homocysteine + adenine. The catalysed reaction is S-methyl-5'-thioadenosine + H2O = 5-(methylsulfanyl)-D-ribose + adenine. It catalyses the reaction 5'-deoxyadenosine + H2O = 5-deoxy-D-ribose + adenine. Its pathway is amino-acid biosynthesis; L-methionine biosynthesis via salvage pathway; S-methyl-5-thio-alpha-D-ribose 1-phosphate from S-methyl-5'-thioadenosine (hydrolase route): step 1/2. In terms of biological role, catalyzes the irreversible cleavage of the glycosidic bond in both 5'-methylthioadenosine (MTA) and S-adenosylhomocysteine (SAH/AdoHcy) to adenine and the corresponding thioribose, 5'-methylthioribose and S-ribosylhomocysteine, respectively. Also cleaves 5'-deoxyadenosine, a toxic by-product of radical S-adenosylmethionine (SAM) enzymes, into 5-deoxyribose and adenine. The sequence is that of 5'-methylthioadenosine/S-adenosylhomocysteine nucleosidase from Anoxybacillus flavithermus (strain DSM 21510 / WK1).